A 361-amino-acid chain; its full sequence is Myricetin 3-O-methyltransferase 3 (361 aa).

Asp229 lines the S-adenosyl-L-methionine pocket. His267 functions as the Proton acceptor in the catalytic mechanism.

It belongs to the class I-like SAM-binding methyltransferase superfamily. Cation-independent O-methyltransferase family. Homodimer. As to expression, mainly expressed in leaves secreting glandular trichomes types 1 and 4 and, to a lesser extent, in storage trichomes type 6.

It carries out the reaction kaempferol + S-adenosyl-L-methionine = 3-O-methylkaempferol + S-adenosyl-L-homocysteine + H(+). The enzyme catalyses quercetin + S-adenosyl-L-methionine = 3',4',5,7-tetrahydroxy-3-methoxyflavone + S-adenosyl-L-homocysteine + H(+). It catalyses the reaction myricetin + S-adenosyl-L-methionine = 3-O-methylmyricetin + S-adenosyl-L-homocysteine + H(+). The catalysed reaction is kaempferide + S-adenosyl-L-methionine = 3,4'-O-dimethylkaempferol + S-adenosyl-L-homocysteine + H(+). It carries out the reaction isorhamnetin + S-adenosyl-L-methionine = 3,3'-O-dimethylquercetin + S-adenosyl-L-homocysteine + H(+). The enzyme catalyses rhamnetin + S-adenosyl-L-methionine = 3',4',5-trihydroxy-3,7-dimethoxyflavone + S-adenosyl-L-homocysteine + H(+). It catalyses the reaction laricitrin + S-adenosyl-L-methionine = 3,3'-O-dimethylmyricetin + S-adenosyl-L-homocysteine + H(+). The catalysed reaction is syringetin + S-adenosyl-L-methionine = 3,3',5'-O-trimethylmyricetin + S-adenosyl-L-homocysteine + H(+). The protein operates within flavonoid metabolism. Functionally, flavonoid 3-O-methyltransferase involved in the biosynthesis of polymethoxylated flavonoids natural products such as myricetin derivatives, aroma compounds possessing antioxidant properties and exhibiting pharmacological activities such as anti-carcinogen, anti-viral, anti-thrombotic, anti-diabetic, anti-atherosclerotic, and anti-inflammatory effects. Catalyzes S-adenosylmethionine-dependent regioselective 3-O-methylation of flavonoids; active on various hydroxylated flavonoid substrates. Active with myricetin, quercetin, kaempferol, 4'-methyl kaempferol (kaempferide), 3'-methyl quercetin (isorhamnetin), 7-methyl quercetin (rhamnetin), 3'-methyl myricetin (laricitrin) and 3',5'-dimethyl myricetin (syringetin), thus producing 3-methyl myricetin, 3-methyl quercetin, 3-methyl kaempferol, 4',3-methyl kaempferol, 3',3-methyl quercetin, 7,3-dimethyl quercetin, 3',3-dimethyl myricetin and 3',5',3-dimethyl myricetin, respectively. Inactive with flavonol substrates methylated at the 3-hydroxyl position such as 3-O-methyl quercetin. The chain is Myricetin 3-O-methyltransferase 3 from Solanum habrochaites (Wild tomato).